The following is a 631-amino-acid chain: Methanol dehydrogenase [cytochrome c] subunit 1 (631 aa).

The signal sequence occupies residues 1 to 32 (MNRNTPKARGASSLAMAVAMGLAVLTTAPATA). Residues Cys-135 and Cys-136 are joined by a disulfide bond. Ca(2+) contacts are provided by Glu-209 and Asn-293. Asp-335 functions as the Proton acceptor in the catalytic mechanism. A disulfide bridge links Cys-418 with Cys-447.

It belongs to the bacterial PQQ dehydrogenase family. As to quaternary structure, heterotetramer composed of 2 alpha and 2 beta subunits. The cofactor is pyrroloquinoline quinone. It depends on Ca(2+) as a cofactor.

It is found in the periplasm. It catalyses the reaction 2 Fe(III)-[cytochrome cL] + a primary alcohol = 2 Fe(II)-[cytochrome cL] + an aldehyde + 2 H(+). In terms of biological role, catalyzes the oxidation of primary alcohols including methanol. This Paracoccus denitrificans protein is Methanol dehydrogenase [cytochrome c] subunit 1 (moxF).